Consider the following 343-residue polypeptide: N-acetyl-gamma-glutamyl-phosphate reductase (343 aa).

Residue Cys149 is part of the active site.

It belongs to the NAGSA dehydrogenase family. Type 1 subfamily.

It localises to the cytoplasm. It carries out the reaction N-acetyl-L-glutamate 5-semialdehyde + phosphate + NADP(+) = N-acetyl-L-glutamyl 5-phosphate + NADPH + H(+). Its pathway is amino-acid biosynthesis; L-arginine biosynthesis; N(2)-acetyl-L-ornithine from L-glutamate: step 3/4. Functionally, catalyzes the NADPH-dependent reduction of N-acetyl-5-glutamyl phosphate to yield N-acetyl-L-glutamate 5-semialdehyde. The chain is N-acetyl-gamma-glutamyl-phosphate reductase from Alkalilimnicola ehrlichii (strain ATCC BAA-1101 / DSM 17681 / MLHE-1).